Reading from the N-terminus, the 331-residue chain is Probable transaldolase (331 aa).

Residue Lys-142 is the Schiff-base intermediate with substrate of the active site.

This sequence belongs to the transaldolase family. Type 1 subfamily. As to quaternary structure, homodimer.

It is found in the cytoplasm. The catalysed reaction is D-sedoheptulose 7-phosphate + D-glyceraldehyde 3-phosphate = D-erythrose 4-phosphate + beta-D-fructose 6-phosphate. The protein operates within carbohydrate degradation; pentose phosphate pathway; D-glyceraldehyde 3-phosphate and beta-D-fructose 6-phosphate from D-ribose 5-phosphate and D-xylulose 5-phosphate (non-oxidative stage): step 2/3. Transaldolase is important for the balance of metabolites in the pentose-phosphate pathway. In Drosophila melanogaster (Fruit fly), this protein is Probable transaldolase.